A 2717-amino-acid chain; its full sequence is Naringenin synthase (2717 aa).

The interval 13–422 is adenylation (A) domain; sequence HHAVESRDKV…VGRKKELIIR (410 aa). Residues 531–617 enclose the Carrier 1 domain; it reads AAVEALVLAE…AVRDYLFNRL (87 aa). S576 is modified (O-(pantetheine 4'-phosphoryl)serine). The 429-residue stretch at 638–1066 folds into the Ketosynthase family 3 (KS3) domain; the sequence is AEPIAIISMA…GTNAHIILEQ (429 aa). Catalysis depends on for beta-ketoacyl synthase activity residues C810, H945, and H988. A Malonyl-CoA:ACP transacylase (MAT) domain is found at 1204–1462; sequence PIFSRAFKEA…GPSAVLSPHV (259 aa). Residues 1549–1688 are N-terminal hotdog fold; that stretch reads HGVLYRTTSI…GTLKLISLPP (140 aa). One can recognise a PKS/mFAS DH domain in the interval 1549-1847; sequence HGVLYRTTSI…LRAVQPPVVE (299 aa). The segment at 1561-1842 is dehydratase (DH) domain; the sequence is TNDIICAGFV…ISEVMLRAVQ (282 aa). H1581 serves as the catalytic Proton acceptor; for dehydratase activity. Positions 1703–1847 are C-terminal hotdog fold; sequence NSEVDVSKAY…LRAVQPPVVE (145 aa). D1764 (proton donor; for dehydratase activity) is an active-site residue. Residues 2008–2186 form the Ketoreductase (KR) domain; the sequence is GTVLITGGTG…AVSLAWGPWA (179 aa). In terms of domain architecture, Carrier 2 spans 2277-2354; sequence SRSDTLLGLV…ALVQYLLDRI (78 aa). S2313 bears the O-(pantetheine 4'-phosphoryl)serine mark. Residues 2361 to 2373 show a composition bias toward acidic residues; sequence EIELDQDVAEEET. The tract at residues 2361 to 2412 is disordered; the sequence is EIELDQDVAEEETVSGTNGHQNGHQNGTQNGHSNGHANGASTNGDATDGIDP. Positions 2375–2396 are enriched in low complexity; that stretch reads SGTNGHQNGHQNGTQNGHSNGH. The segment at 2497 to 2711 is thioester reductase (TE) domain; it reads SLSVYSAVAA…AIAVEIEHWA (215 aa).

It in the N-terminal section; belongs to the NRP synthetase family. It depends on pantetheine 4'-phosphate as a cofactor.

In terms of biological role, PKS-NRPS hybrid synthetase that, alone, is sufficient to produce naringenin chalcone, the direct precursor of naringenin, by using p-coumaric acid (p-CA) or p-hydroxybenzoic acid (p-HBA) with the involvement of malonyl-CoA molecules. The adenylation (A) domain activates p-CA or p-HBA as adenylates, which are transferred to the thiol group of the pantetheinyl residue of the T domain, and further transferred to the adjacent PKS portion of fnsA. Besides p-CA and p-HBA, the A domain is also able to activate other substrates such as cinnamic acid and salicyclic acid. Within the PKS portion of fnsA, p-CA and p-HBA act as starter units for respectively three or four malonyl-CoA molecules for elongation by the AT and KS domains of fnsA. Afterwards, naringenin chalcone is cyclized through Claisen condensation and thereby released either spontaneously or catalyzed by the TE domain. Finally, naringenin chalcone is converted to naringenin spontaneously or by a chalcone isomerase. In Pestalotiopsis fici (strain W106-1 / CGMCC3.15140), this protein is Naringenin synthase.